Reading from the N-terminus, the 361-residue chain is MTKHAAYSSEDVVAAVAAPAPAGRHFTSFQALKGAPLDCKKHAAVDLSASGAAVVGGGPWFESMKASSPRRAADAEHGDWMEKHPSALAQFEPLLAAAKGKQIVMFLDYDGTLSPIVEDPDRAVMSEEMREAVRRVAEHFPTAIVSGRCRDKVLNFVKLTELYYAGSHGMDIQGPAACRQPNHVQQAEAAAVHYQAASEFLPVIEEVFRTLTAKMESIAGARVEHNKYCLSVHFRCVREEEWNAVNEEVRSVLREYPNLKLTHGRKVLEIRPSIKWDKGKALEFLLKSLGYAGRNDVFPIYIGDDRTDEDAFKVLRNMGQGIGILVSKLPKETAASYSLSDPAEVKEFLRKLANKKGARQP.

It belongs to the trehalose phosphatase family. Requires a divalent metal cation as cofactor. As to expression, expressed in axillary inflorescence meristems.

The catalysed reaction is alpha,alpha-trehalose 6-phosphate + H2O = alpha,alpha-trehalose + phosphate. The protein operates within glycan biosynthesis; trehalose biosynthesis. Functionally, removes the phosphate from trehalose 6-phosphate to produce free trehalose. Is specific for trehalose 6-phosphate. Does not possess activity toward glucose, sucrose or fructose 6-phosphates. Regulates inflorescence branching. Required to establish the correct identity and determinacy of axillary meristems in both male and female inflorescences. May act through a sugar signal that moves into axillary meristems. Acts upstream of RA1. May have a transcriptional regulatory function. This is Trehalose 6-phosphate phosphatase RA3 from Zea mays (Maize).